A 1435-amino-acid polypeptide reads, in one-letter code: Sterol 3-beta-glucosyltransferase (1435 aa).

Disordered stretches follow at residues 1-26 (MAPDDESKKRATRKSTKRWKEEHQVA), 75-107 (SDEEYDLGKPTRQSSESHINRSSIDQKMGKFEG), 123-169 (RFSS…KDTP), and 185-206 (PSFEMPRKSKDPAEVDDERTSP). Positions 85 to 99 (TRQSSESHINRSSID) are enriched in polar residues. Residues 123–133 (RFSSRSKSKSS) show a composition bias toward low complexity. Over residues 134-143 (NTIARGSRTP) the composition is skewed to polar residues. Positions 189–206 (MPRKSKDPAEVDDERTSP) are enriched in basic and acidic residues. In terms of domain architecture, GRAM 1 spans 211 to 258 (ERLMEIFKFETPEDVLEEYPCWLMKSVLLQGYMYITTKHICFYAYLPK). The PH domain occupies 262-360 (EVVKSGYLSK…WVKALQKIIF (99 aa)). 4 disordered regions span residues 444–477 (LSTADDSRGSSKRTSFQVSRDRKLHGPSVQPNAP), 527–594 (DLNR…QASA), 610–671 (QHSP…QAEI), and 727–759 (GKKHYEEPHGIPRDNEMPSIGDDDDNRDGATPA). Residues 527 to 537 (DLNRLTTEHHR) are compositionally biased toward basic and acidic residues. 3 stretches are compositionally biased toward polar residues: residues 539 to 554 (NSANSISTRRSLSTNR), 628 to 647 (KSRSLTSPIKSADVSPTRTQ), and 657 to 671 (TTGSVSDSNVGQAEI). Positions 729 to 742 (KHYEEPHGIPRDNE) are enriched in basic and acidic residues. The GRAM 2 domain maps to 760 to 826 (DRFRDHFALP…KDIENVDKEK (67 aa)). UDP-alpha-D-glucose contacts are provided by serine 949, arginine 950, aspartate 952, alanine 1252, histidine 1254, histidine 1267, glycine 1271, threonine 1272, aspartate 1291, and glutamine 1292.

It belongs to the glycosyltransferase 28 family.

It localises to the cytoplasm. The protein localises to the preautophagosomal structure membrane. It carries out the reaction a sterol + UDP-alpha-D-glucose = a sterol 3-beta-D-glucoside + UDP + H(+). The enzyme catalyses ergosterol + UDP-alpha-D-glucose = ergosteryl 3-beta-D-glucoside + UDP + H(+). Functionally, sterol glycosyltransferase responsible for the glycosylation of ergosterol to form ergosterol-glucoside. This Sclerotinia sclerotiorum (strain ATCC 18683 / 1980 / Ss-1) (White mold) protein is Sterol 3-beta-glucosyltransferase.